The sequence spans 113 residues: Large ribosomal subunit protein P1 (113 aa).

A compositionally biased stretch (low complexity) spans 56 to 66 (TAAAAPAPAAG). The segment at 56–113 (TAAAAPAPAAGGSAGGEVEAADDDDEEDAEEEAADEGGDDDGDDDEEADGEGLGALFG) is disordered. Over residues 74–105 (EAADDDDEEDAEEEAADEGGDDDGDDDEEADG) the composition is skewed to acidic residues.

It belongs to the eukaryotic ribosomal protein P1/P2 family. As to quaternary structure, part of the 50S ribosomal subunit. Homodimer, it forms part of the ribosomal stalk which helps the ribosome interact with GTP-bound translation factors. Forms a heptameric uL10/P0(P1)2(P1)2(P1)2 complex, where uL10/P0 forms an elongated spine to which the P1 dimers bind in a sequential fashion.

Functionally, forms part of the ribosomal stalk, playing a central role in the interaction of the ribosome with GTP-bound translation factors. The polypeptide is Large ribosomal subunit protein P1 (Haloferax volcanii (strain ATCC 29605 / DSM 3757 / JCM 8879 / NBRC 14742 / NCIMB 2012 / VKM B-1768 / DS2) (Halobacterium volcanii)).